A 342-amino-acid polypeptide reads, in one-letter code: Anthranilate phosphoribosyltransferase (342 aa).

Residues Gly81, 84–85 (GD), Thr89, 91–94 (NIST), 109–117 (KHGNRALSS), and Thr121 each bind 5-phospho-alpha-D-ribose 1-diphosphate. Gly81 contacts anthranilate. Ser93 contributes to the Mg(2+) binding site. Position 112 (Asn112) interacts with anthranilate. Anthranilate is bound at residue Arg167. Mg(2+) contacts are provided by Asp225 and Glu226.

This sequence belongs to the anthranilate phosphoribosyltransferase family. As to quaternary structure, homodimer. Mg(2+) is required as a cofactor.

The enzyme catalyses N-(5-phospho-beta-D-ribosyl)anthranilate + diphosphate = 5-phospho-alpha-D-ribose 1-diphosphate + anthranilate. Its pathway is amino-acid biosynthesis; L-tryptophan biosynthesis; L-tryptophan from chorismate: step 2/5. Its function is as follows. Catalyzes the transfer of the phosphoribosyl group of 5-phosphorylribose-1-pyrophosphate (PRPP) to anthranilate to yield N-(5'-phosphoribosyl)-anthranilate (PRA). The polypeptide is Anthranilate phosphoribosyltransferase (Agrobacterium fabrum (strain C58 / ATCC 33970) (Agrobacterium tumefaciens (strain C58))).